Consider the following 282-residue polypeptide: Centromere protein P (282 aa).

Positions 1 to 80 (MEQKYEEDIQ…KDLRRQTEIN (80 aa)) form a coiled coil.

It belongs to the CENP-P/CTF19 family.

It is found in the nucleus. The protein resides in the chromosome. The protein localises to the centromere. Its function is as follows. Probable component of a centromeric complex involved in assembly of kinetochore proteins, mitotic progression and chromosome segregation. The protein is Centromere protein P (cenpp) of Danio rerio (Zebrafish).